A 612-amino-acid polypeptide reads, in one-letter code: Threonine--tRNA ligase (612 aa).

A catalytic region spans residues Asp-218–Pro-509. Positions 310, 361, and 486 each coordinate Zn(2+).

This sequence belongs to the class-II aminoacyl-tRNA synthetase family. Homodimer. Zn(2+) is required as a cofactor.

The protein resides in the cytoplasm. It catalyses the reaction tRNA(Thr) + L-threonine + ATP = L-threonyl-tRNA(Thr) + AMP + diphosphate + H(+). Its function is as follows. Catalyzes the attachment of threonine to tRNA(Thr) in a two-step reaction: L-threonine is first activated by ATP to form Thr-AMP and then transferred to the acceptor end of tRNA(Thr). Also edits incorrectly charged L-seryl-tRNA(Thr). The polypeptide is Threonine--tRNA ligase (Helicobacter pylori (strain ATCC 700392 / 26695) (Campylobacter pylori)).